A 210-amino-acid chain; its full sequence is Imidazole glycerol phosphate synthase subunit HisH 1 (210 aa).

A Glutamine amidotransferase type-1 domain is found at 3 to 210 (KIAIVDYGMC…LDNFLSFSNV (208 aa)). C82 serves as the catalytic Nucleophile. Active-site residues include H189 and E191.

In terms of assembly, heterodimer of HisH and HisF.

It localises to the cytoplasm. The enzyme catalyses 5-[(5-phospho-1-deoxy-D-ribulos-1-ylimino)methylamino]-1-(5-phospho-beta-D-ribosyl)imidazole-4-carboxamide + L-glutamine = D-erythro-1-(imidazol-4-yl)glycerol 3-phosphate + 5-amino-1-(5-phospho-beta-D-ribosyl)imidazole-4-carboxamide + L-glutamate + H(+). The catalysed reaction is L-glutamine + H2O = L-glutamate + NH4(+). It participates in amino-acid biosynthesis; L-histidine biosynthesis; L-histidine from 5-phospho-alpha-D-ribose 1-diphosphate: step 5/9. IGPS catalyzes the conversion of PRFAR and glutamine to IGP, AICAR and glutamate. The HisH subunit provides the glutamine amidotransferase activity that produces the ammonia necessary to HisF for the synthesis of IGP and AICAR. The protein is Imidazole glycerol phosphate synthase subunit HisH 1 (hisH1) of Parasynechococcus marenigrum (strain WH8102).